The sequence spans 260 residues: Adenosylcobinamide-GDP ribazoletransferase (260 aa).

A run of 7 helical transmembrane segments spans residues 42-62 (PLAGGILGLLAGVALLIANAI), 64-84 (LPPLAAALIAIGALAAMTGAL), 117-137 (FAALTLVIWTGVKASLLMAII), 144-164 (YALLALIGTEAASRAGMLAFW), 192-212 (GLGLALLAIGFLPSGGMVALI), 214-234 (ALVLMTVVLFGFARLCMAKIG), and 240-260 (TLGAAQQIGSLAALIGLVMAL).

The protein belongs to the CobS family. Requires Mg(2+) as cofactor.

It is found in the cell inner membrane. The catalysed reaction is alpha-ribazole + adenosylcob(III)inamide-GDP = adenosylcob(III)alamin + GMP + H(+). It catalyses the reaction alpha-ribazole 5'-phosphate + adenosylcob(III)inamide-GDP = adenosylcob(III)alamin 5'-phosphate + GMP + H(+). The protein operates within cofactor biosynthesis; adenosylcobalamin biosynthesis; adenosylcobalamin from cob(II)yrinate a,c-diamide: step 7/7. In terms of biological role, joins adenosylcobinamide-GDP and alpha-ribazole to generate adenosylcobalamin (Ado-cobalamin). Also synthesizes adenosylcobalamin 5'-phosphate from adenosylcobinamide-GDP and alpha-ribazole 5'-phosphate. The protein is Adenosylcobinamide-GDP ribazoletransferase of Brucella melitensis biotype 1 (strain ATCC 23456 / CCUG 17765 / NCTC 10094 / 16M).